Reading from the N-terminus, the 220-residue chain is 3-dehydroquinate dehydratase (220 aa).

Residues Ser-8, 30–32 (ELR), and Arg-63 contribute to the 3-dehydroquinate site. His-114 functions as the Proton donor/acceptor in the catalytic mechanism. The active-site Schiff-base intermediate with substrate is Lys-140. 3-dehydroquinate contacts are provided by Arg-174 and Gln-197.

The protein belongs to the type-I 3-dehydroquinase family. Homodimer.

The enzyme catalyses 3-dehydroquinate = 3-dehydroshikimate + H2O. Its pathway is metabolic intermediate biosynthesis; chorismate biosynthesis; chorismate from D-erythrose 4-phosphate and phosphoenolpyruvate: step 3/7. Involved in the third step of the chorismate pathway, which leads to the biosynthesis of aromatic amino acids. Catalyzes the cis-dehydration of 3-dehydroquinate (DHQ) and introduces the first double bond of the aromatic ring to yield 3-dehydroshikimate. This Saccharolobus solfataricus (strain ATCC 35092 / DSM 1617 / JCM 11322 / P2) (Sulfolobus solfataricus) protein is 3-dehydroquinate dehydratase.